A 372-amino-acid polypeptide reads, in one-letter code: Alanine dehydrogenase 2 (372 aa).

Residue histidine 95 is part of the active site. 169–199 (KVTIIGGGQAGTNAAKIALGLGADVTILDVN) contributes to the NAD(+) binding site.

It belongs to the AlaDH/PNT family.

It carries out the reaction L-alanine + NAD(+) + H2O = pyruvate + NH4(+) + NADH + H(+). Its pathway is amino-acid degradation; L-alanine degradation via dehydrogenase pathway; NH(3) and pyruvate from L-alanine: step 1/1. Functionally, may play a role in cell wall synthesis as L-alanine is an important constituent of the peptidoglycan layer. This Staphylococcus aureus (strain N315) protein is Alanine dehydrogenase 2 (ald2).